A 339-amino-acid polypeptide reads, in one-letter code: Biotin synthase (339 aa).

Positions 53–271 (NAIQMSRLLS…IALARILMPR (219 aa)) constitute a Radical SAM core domain. 3 residues coordinate [4Fe-4S] cluster: C68, C72, and C75. Positions 112, 143, 203, and 275 each coordinate [2Fe-2S] cluster.

The protein belongs to the radical SAM superfamily. Biotin synthase family. As to quaternary structure, homodimer. [4Fe-4S] cluster is required as a cofactor. It depends on [2Fe-2S] cluster as a cofactor.

It catalyses the reaction (4R,5S)-dethiobiotin + (sulfur carrier)-SH + 2 reduced [2Fe-2S]-[ferredoxin] + 2 S-adenosyl-L-methionine = (sulfur carrier)-H + biotin + 2 5'-deoxyadenosine + 2 L-methionine + 2 oxidized [2Fe-2S]-[ferredoxin]. The protein operates within cofactor biosynthesis; biotin biosynthesis; biotin from 7,8-diaminononanoate: step 2/2. Its function is as follows. Catalyzes the conversion of dethiobiotin (DTB) to biotin by the insertion of a sulfur atom into dethiobiotin via a radical-based mechanism. The sequence is that of Biotin synthase from Agrobacterium fabrum (strain C58 / ATCC 33970) (Agrobacterium tumefaciens (strain C58)).